Reading from the N-terminus, the 203-residue chain is Small ribosomal subunit protein uS4c (203 aa).

Residues 89–152 (MRLDNILFRL…QSRTLIQNSL (64 aa)) form the S4 RNA-binding domain.

It belongs to the universal ribosomal protein uS4 family. In terms of assembly, part of the 30S ribosomal subunit. Contacts protein S5. The interaction surface between S4 and S5 is involved in control of translational fidelity.

It localises to the plastid. One of the primary rRNA binding proteins, it binds directly to 16S rRNA where it nucleates assembly of the body of the 30S subunit. Its function is as follows. With S5 and S12 plays an important role in translational accuracy. In Orobanche minor (Small broomrape), this protein is Small ribosomal subunit protein uS4c (rps4).